The sequence spans 558 residues: Glucose-6-phosphate isomerase (558 aa).

The residue at position 12 (K12) is an N6-acetyllysine. 2 positions are modified to phosphoserine: S86 and S107. Residue K142 is modified to N6-acetyllysine. Position 159-160 (159-160) interacts with D-glucose 6-phosphate; sequence GS. A Phosphoserine; by CK2 modification is found at S185. 210 to 215 serves as a coordination point for D-glucose 6-phosphate; the sequence is SKTFTT. T250 is subject to Phosphothreonine. D-glucose 6-phosphate is bound by residues Q354, E358, and H389. E358 functions as the Proton donor in the catalytic mechanism. Residue H389 is part of the active site. K454 carries the N6-acetyllysine; alternate modification. K454 bears the N6-malonyllysine; alternate mark. K454 bears the N6-succinyllysine; alternate mark. Residue S455 is modified to Phosphoserine. K519 contributes to the D-glucose 6-phosphate binding site. K519 is a catalytic residue.

This sequence belongs to the GPI family. Homodimer; in the catalytically active form. Monomer in the secreted form. Phosphorylation at Ser-185 by CK2 has been shown to decrease enzymatic activity and may contribute to secretion by a non-classical secretory pathway. In terms of processing, ISGylated.

It is found in the cytoplasm. The protein resides in the secreted. It catalyses the reaction alpha-D-glucose 6-phosphate = beta-D-fructose 6-phosphate. It functions in the pathway carbohydrate degradation; glycolysis; D-glyceraldehyde 3-phosphate and glycerone phosphate from D-glucose: step 2/4. In terms of biological role, in the cytoplasm, catalyzes the conversion of glucose-6-phosphate to fructose-6-phosphate, the second step in glycolysis, and the reverse reaction during gluconeogenesis. Besides it's role as a glycolytic enzyme, also acts as a secreted cytokine: acts as an angiogenic factor (AMF) that stimulates endothelial cell motility. Acts as a neurotrophic factor, neuroleukin, for spinal and sensory neurons. It is secreted by lectin-stimulated T-cells and induces immunoglobulin secretion. This Cricetulus griseus (Chinese hamster) protein is Glucose-6-phosphate isomerase.